We begin with the raw amino-acid sequence, 226 residues long: Ribose-5-phosphate isomerase A (226 aa).

Residues 33–36 (TGST), 86–89 (DGAD), and 99–102 (KGGG) contribute to the substrate site. Glu-108 (proton acceptor) is an active-site residue. Lys-126 contacts substrate.

It belongs to the ribose 5-phosphate isomerase family. Homodimer.

It carries out the reaction aldehydo-D-ribose 5-phosphate = D-ribulose 5-phosphate. It participates in carbohydrate degradation; pentose phosphate pathway; D-ribose 5-phosphate from D-ribulose 5-phosphate (non-oxidative stage): step 1/1. Functionally, catalyzes the reversible conversion of ribose-5-phosphate to ribulose 5-phosphate. This Bordetella parapertussis (strain 12822 / ATCC BAA-587 / NCTC 13253) protein is Ribose-5-phosphate isomerase A.